We begin with the raw amino-acid sequence, 170 residues long: Lipoprotein signal peptidase (170 aa).

Helical transmembrane passes span 12-32, 67-87, and 93-113; these read WYWV…WVLA, WQRW…TVWL, and GLWR…GNLI. Active-site residues include Asp-123 and Asp-141. Residues 133–153 traverse the membrane as a helical segment; that stretch reads HFPAFNIADSAICVGAGLIIL.

Belongs to the peptidase A8 family.

It localises to the cell inner membrane. It catalyses the reaction Release of signal peptides from bacterial membrane prolipoproteins. Hydrolyzes -Xaa-Yaa-Zaa-|-(S,diacylglyceryl)Cys-, in which Xaa is hydrophobic (preferably Leu), and Yaa (Ala or Ser) and Zaa (Gly or Ala) have small, neutral side chains.. The protein operates within protein modification; lipoprotein biosynthesis (signal peptide cleavage). In terms of biological role, this protein specifically catalyzes the removal of signal peptides from prolipoproteins. This chain is Lipoprotein signal peptidase, found in Shewanella loihica (strain ATCC BAA-1088 / PV-4).